A 210-amino-acid polypeptide reads, in one-letter code: Thiamine-phosphate synthase (210 aa).

Residues 43–47 (QLREK) and Asn75 contribute to the 4-amino-2-methyl-5-(diphosphooxymethyl)pyrimidine site. The Mg(2+) site is built by Asp76 and Asp95. Ser114 contributes to the 4-amino-2-methyl-5-(diphosphooxymethyl)pyrimidine binding site. 140–142 (TST) serves as a coordination point for 2-[(2R,5Z)-2-carboxy-4-methylthiazol-5(2H)-ylidene]ethyl phosphate. 4-amino-2-methyl-5-(diphosphooxymethyl)pyrimidine is bound at residue Lys143. 2-[(2R,5Z)-2-carboxy-4-methylthiazol-5(2H)-ylidene]ethyl phosphate is bound by residues Gly170 and 190 to 191 (IS).

The protein belongs to the thiamine-phosphate synthase family. It depends on Mg(2+) as a cofactor.

The enzyme catalyses 2-[(2R,5Z)-2-carboxy-4-methylthiazol-5(2H)-ylidene]ethyl phosphate + 4-amino-2-methyl-5-(diphosphooxymethyl)pyrimidine + 2 H(+) = thiamine phosphate + CO2 + diphosphate. The catalysed reaction is 2-(2-carboxy-4-methylthiazol-5-yl)ethyl phosphate + 4-amino-2-methyl-5-(diphosphooxymethyl)pyrimidine + 2 H(+) = thiamine phosphate + CO2 + diphosphate. It catalyses the reaction 4-methyl-5-(2-phosphooxyethyl)-thiazole + 4-amino-2-methyl-5-(diphosphooxymethyl)pyrimidine + H(+) = thiamine phosphate + diphosphate. It participates in cofactor biosynthesis; thiamine diphosphate biosynthesis; thiamine phosphate from 4-amino-2-methyl-5-diphosphomethylpyrimidine and 4-methyl-5-(2-phosphoethyl)-thiazole: step 1/1. Its function is as follows. Condenses 4-methyl-5-(beta-hydroxyethyl)thiazole monophosphate (THZ-P) and 2-methyl-4-amino-5-hydroxymethyl pyrimidine pyrophosphate (HMP-PP) to form thiamine monophosphate (TMP). This chain is Thiamine-phosphate synthase, found in Clostridioides difficile (strain 630) (Peptoclostridium difficile).